A 366-amino-acid chain; its full sequence is Flagellar P-ring protein (366 aa).

Positions 1 to 23 (MRTLKIFALAVSLLSMLAAPVQA) are cleaved as a signal peptide.

It belongs to the FlgI family. In terms of assembly, the basal body constitutes a major portion of the flagellar organelle and consists of four rings (L,P,S, and M) mounted on a central rod.

It localises to the periplasm. Its subcellular location is the bacterial flagellum basal body. Assembles around the rod to form the L-ring and probably protects the motor/basal body from shearing forces during rotation. The polypeptide is Flagellar P-ring protein (Idiomarina loihiensis (strain ATCC BAA-735 / DSM 15497 / L2-TR)).